We begin with the raw amino-acid sequence, 429 residues long: 3-phosphoshikimate 1-carboxyvinyltransferase (429 aa).

3-phosphoshikimate contacts are provided by Lys-23, Ser-24, and Arg-28. Lys-23 lines the phosphoenolpyruvate pocket. Residues Gly-95 and Arg-123 each coordinate phosphoenolpyruvate. Residues Ser-168, Gln-170, Asp-316, and Lys-343 each contribute to the 3-phosphoshikimate site. Residue Gln-170 coordinates phosphoenolpyruvate. The active-site Proton acceptor is the Asp-316. Residues Arg-347 and Arg-389 each contribute to the phosphoenolpyruvate site.

The protein belongs to the EPSP synthase family. As to quaternary structure, monomer.

It is found in the cytoplasm. It carries out the reaction 3-phosphoshikimate + phosphoenolpyruvate = 5-O-(1-carboxyvinyl)-3-phosphoshikimate + phosphate. It functions in the pathway metabolic intermediate biosynthesis; chorismate biosynthesis; chorismate from D-erythrose 4-phosphate and phosphoenolpyruvate: step 6/7. Its function is as follows. Catalyzes the transfer of the enolpyruvyl moiety of phosphoenolpyruvate (PEP) to the 5-hydroxyl of shikimate-3-phosphate (S3P) to produce enolpyruvyl shikimate-3-phosphate and inorganic phosphate. The protein is 3-phosphoshikimate 1-carboxyvinyltransferase of Bacillus cereus (strain AH187).